The following is a 185-amino-acid chain: Segregation and condensation protein B (185 aa).

It belongs to the ScpB family. As to quaternary structure, homodimer. Homodimerization may be required to stabilize the binding of ScpA to the Smc head domains. Component of a cohesin-like complex composed of ScpA, ScpB and the Smc homodimer, in which ScpA and ScpB bind to the head domain of Smc. The presence of the three proteins is required for the association of the complex with DNA.

It is found in the cytoplasm. In terms of biological role, participates in chromosomal partition during cell division. May act via the formation of a condensin-like complex containing Smc and ScpA that pull DNA away from mid-cell into both cell halves. The polypeptide is Segregation and condensation protein B (Alkaliphilus oremlandii (strain OhILAs) (Clostridium oremlandii (strain OhILAs))).